We begin with the raw amino-acid sequence, 525 residues long: Vesicular inhibitory amino acid transporter (525 aa).

The Cytoplasmic portion of the chain corresponds to 1 to 132; that stretch reads MATLLRSKLS…WNVTNAIQGM (132 aa). A disordered region spans residues 83-107; it reads IHYQRGSGAPLPPSGSKDQVGGGGE. The chain crosses the membrane as a helical span at residues 133-153; that stretch reads FVLGLPYAILHGGYLGLFLII. Residues 154–204 lie on the Lumenal, vesicle side of the membrane; the sequence is FAAVVCCYTGKILIACLYEENEDGEVVRVRDSYVAIANACCAPRFPTLGGR. Tyr-186 carries the 3'-nitrotyrosine modification. The chain crosses the membrane as a helical span at residues 205-225; it reads VVNVAQIIELVMTCILYVVVS. Over 226-265 the chain is Cytoplasmic; sequence GNLMYNSFPGLPVSQKSWSIIATAVLLPCAFLKNLKAVSK. A helical transmembrane segment spans residues 266–286; that stretch reads FSLLCTLAHFVINILVIAYCL. Residues 287-305 are Lumenal, vesicle-facing; the sequence is SRARDWAWEKVKFYIDVKK. Residues 306–326 traverse the membrane as a helical segment; it reads FPISIGIIVFSYTSQIFLPSL. Topologically, residues 327–341 are cytoplasmic; the sequence is EGNMQQPSEFHCMMN. The helical transmembrane segment at 342–362 threads the bilayer; the sequence is WTHIAACVLKGLFALVAYLTW. Topologically, residues 363-383 are lumenal, vesicle; that stretch reads ADETKEVITDNLPGSIRAVVN. Residues 384–404 form a helical membrane-spanning segment; it reads IFLVAKALLSYPLPFFAAVEV. Over 405 to 438 the chain is Cytoplasmic; the sequence is LEKSLFQEGSRAFFPACYSGDGRLKSWGLTLRCA. The chain crosses the membrane as a helical span at residues 439–459; that stretch reads LVVFTLLMAIYVPHFALLMGL. At 460–461 the chain is on the lumenal, vesicle side; the sequence is TG. The chain crosses the membrane as a helical span at residues 462–482; that stretch reads SLTGAGLCFLLPSLFHLRLLW. The Cytoplasmic portion of the chain corresponds to 483-489; it reads RKLLWHQ. A helical transmembrane segment spans residues 490-510; it reads VFFDVAIFVIGGICSVSGFVH. Residues 511 to 525 lie on the Lumenal, vesicle side of the membrane; it reads SLEGLIEAYRTNAED.

Belongs to the amino acid/polyamine transporter 2 family. Retina. Expressed throughout the horizontal cells or more specifically at the terminals.

It is found in the cytoplasmic vesicle membrane. Its subcellular location is the presynapse. The enzyme catalyses 4-aminobutanoate(out) + n H(+)(in) = 4-aminobutanoate(in) + n H(+)(out). The catalysed reaction is glycine(out) + n H(+)(in) = glycine(in) + n H(+)(out). It carries out the reaction beta-alanine(out) + n H(+)(in) = beta-alanine(in) + n H(+)(out). Antiporter that exchanges vesicular protons for cytosolic 4-aminobutanoate or to a lesser extend glycine, thus allowing their secretion from nerve terminals. The transport is equally dependent on the chemical and electrical components of the proton gradient. May also transport beta-alanine. Acidification of GABAergic synaptic vesicles is a prerequisite for 4-aminobutanoate uptake. The polypeptide is Vesicular inhibitory amino acid transporter (Homo sapiens (Human)).